The primary structure comprises 200 residues: Serine/threonine-protein kinase mos (200 aa).

A Protein kinase domain is found at 2-200 (LCLLQPLGSG…ELLKGERVTA (199 aa)). ATP-binding positions include 8-16 (LGSGGFGSV) and Lys29. Asp143 serves as the catalytic Proton acceptor.

It belongs to the protein kinase superfamily. Ser/Thr protein kinase family.

It carries out the reaction L-seryl-[protein] + ATP = O-phospho-L-seryl-[protein] + ADP + H(+). It catalyses the reaction L-threonyl-[protein] + ATP = O-phospho-L-threonyl-[protein] + ADP + H(+). The polypeptide is Serine/threonine-protein kinase mos (MOS) (Apteryx australis (Southern brown kiwi)).